A 204-amino-acid chain; its full sequence is Methylthioribulose-1-phosphate dehydratase (204 aa).

The Zn(2+) site is built by histidine 94 and histidine 96.

It belongs to the aldolase class II family. MtnB subfamily. Requires Zn(2+) as cofactor.

The enzyme catalyses 5-(methylsulfanyl)-D-ribulose 1-phosphate = 5-methylsulfanyl-2,3-dioxopentyl phosphate + H2O. Its pathway is amino-acid biosynthesis; L-methionine biosynthesis via salvage pathway; L-methionine from S-methyl-5-thio-alpha-D-ribose 1-phosphate: step 2/6. Functionally, catalyzes the dehydration of methylthioribulose-1-phosphate (MTRu-1-P) into 2,3-diketo-5-methylthiopentyl-1-phosphate (DK-MTP-1-P). The protein is Methylthioribulose-1-phosphate dehydratase of Serratia proteamaculans (strain 568).